We begin with the raw amino-acid sequence, 218 residues long: Glycerol-3-phosphate acyltransferase (218 aa).

5 consecutive transmembrane segments (helical) span residues 10 to 30, 60 to 80, 88 to 108, 125 to 145, and 165 to 185; these read LTLGIAIVGGYLLGSIPFGLI, DLAAITLLGDAGKGVVAVLLA, PAIIALAGGSAFLGHLFPVWL, SAAWPVGVAAGATWLAMAFLF, and AFDQPYPFMGLCLFMAVLIFI.

It belongs to the PlsY family. As to quaternary structure, probably interacts with PlsX.

It is found in the cell inner membrane. The catalysed reaction is an acyl phosphate + sn-glycerol 3-phosphate = a 1-acyl-sn-glycero-3-phosphate + phosphate. It participates in lipid metabolism; phospholipid metabolism. Functionally, catalyzes the transfer of an acyl group from acyl-phosphate (acyl-PO(4)) to glycerol-3-phosphate (G3P) to form lysophosphatidic acid (LPA). This enzyme utilizes acyl-phosphate as fatty acyl donor, but not acyl-CoA or acyl-ACP. The protein is Glycerol-3-phosphate acyltransferase of Caulobacter vibrioides (strain ATCC 19089 / CIP 103742 / CB 15) (Caulobacter crescentus).